A 319-amino-acid chain; its full sequence is MSKKIKQELENNKLSKRLRHAVGDAINDFNMIEPGDKIMVCLSGGKDSYALLDILRRLQASAPIDFQLVAVNLDQKQPGFPEEVLPTYLESIGVPYKIVEEDTYSTVKRVLDEGKTTCSLCSRLRRGILYRTAKELGCTKIALGHHRDDILATLFLNMFYGGKLKAMPPKLVSDNGEHIVIRPLAYVKEKDLIKYAELKQFPIIPCNLCGSQPNLQRQVIGDMLRDWDKRFPGRIESMFSALQNVVPSHLADTELFDFVGLERGQSLKHGGDLAFDSEKMPERFSDGSEEDESEIKIEPQKAERKVINILANKPKACGA.

Residues 43 to 48 carry the PP-loop motif motif; sequence SGGKDS. Positions 118, 121, and 209 each coordinate [4Fe-4S] cluster.

Belongs to the TtcA family. As to quaternary structure, homodimer. Mg(2+) is required as a cofactor. [4Fe-4S] cluster serves as cofactor.

Its subcellular location is the cytoplasm. The catalysed reaction is cytidine(32) in tRNA + S-sulfanyl-L-cysteinyl-[cysteine desulfurase] + AH2 + ATP = 2-thiocytidine(32) in tRNA + L-cysteinyl-[cysteine desulfurase] + A + AMP + diphosphate + H(+). Its pathway is tRNA modification. Its function is as follows. Catalyzes the ATP-dependent 2-thiolation of cytidine in position 32 of tRNA, to form 2-thiocytidine (s(2)C32). The sulfur atoms are provided by the cysteine/cysteine desulfurase (IscS) system. This is tRNA-cytidine(32) 2-sulfurtransferase from Neisseria meningitidis serogroup A / serotype 4A (strain DSM 15465 / Z2491).